The sequence spans 555 residues: Efflux pump FUS6 (555 aa).

Residues 1–23 (MASAKDAQPAPEKSLSSDPQPEP) are disordered. The next 5 membrane-spanning stretches (helical) occupy residues 31–51 (WLIF…TSII), 67–87 (LYVW…PIFA), 97–117 (SLTL…GGAH), 130–150 (GIGG…MVSI), and 159–179 (IIGG…GAFA). Asparagine 181 is a glycosylation site (N-linked (GlcNAc...) asparagine). The next 3 membrane-spanning stretches (helical) occupy residues 186–206 (WIFY…GLFL), 225–245 (WGGS…LSWG), and 253–273 (GWQT…FFAY). An N-linked (GlcNAc...) asparagine glycan is attached at asparagine 291. A run of 6 helical transmembrane segments spans residues 297-317 (LLVI…FLPV), 332-352 (VMLF…GITI), 360-380 (VWHF…TLLD), 393-413 (ILFG…ILAS), 425-445 (AWTF…AAVF), and 501-521 (KVVW…CFFV). An N-linked (GlcNAc...) asparagine glycan is attached at asparagine 545.

Belongs to the major facilitator superfamily. TCR/Tet family.

The protein localises to the membrane. Its function is as follows. Efflux pump; part of the gene cluster that mediates the biosynthesis of the mycotoxin fusarin C. Within the cluster, FUS1, FUS2, FUS8 and FUS9 are sufficient for fusarin production. The other FUS cluster members are not essential for fusarin C biosynthesis. The protein is Efflux pump FUS6 of Gibberella fujikuroi (strain CBS 195.34 / IMI 58289 / NRRL A-6831) (Bakanae and foot rot disease fungus).